We begin with the raw amino-acid sequence, 183 residues long: Hypoxanthine-guanine-xanthine phosphoribosyltransferase (183 aa).

Residues 102-110, Lys134, and Asp163 contribute to the GMP site; that span reads EDIIDTGLT. Asp106 (proton acceptor) is an active-site residue. Asp163 is a Mg(2+) binding site.

In terms of assembly, homodimer. It depends on Mg(2+) as a cofactor.

Its subcellular location is the cytoplasm. The catalysed reaction is IMP + diphosphate = hypoxanthine + 5-phospho-alpha-D-ribose 1-diphosphate. It catalyses the reaction GMP + diphosphate = guanine + 5-phospho-alpha-D-ribose 1-diphosphate. The enzyme catalyses XMP + diphosphate = xanthine + 5-phospho-alpha-D-ribose 1-diphosphate. Its pathway is purine metabolism; GMP biosynthesis via salvage pathway; GMP from guanine: step 1/1. It participates in purine metabolism; IMP biosynthesis via salvage pathway; IMP from hypoxanthine: step 1/1. The protein operates within purine metabolism; XMP biosynthesis via salvage pathway; XMP from xanthine: step 1/1. In terms of biological role, essential in nucleic acid metabolism of T.foetus because the parasite is unable to synthesize purine nucleotides de novo and relies on the HGXPRTase activities for its purine requirements by salvaging purine bases from the host. Works with guanine, hypoxanthine and xanthine. The chain is Hypoxanthine-guanine-xanthine phosphoribosyltransferase (HPT) from Tritrichomonas foetus (Trichomonas foetus).